A 316-amino-acid polypeptide reads, in one-letter code: Ester hydrolase C11orf54 homolog (316 aa).

Residues His-267, His-269, and His-279 each coordinate Zn(2+).

In terms of assembly, monomer. It depends on Zn(2+) as a cofactor.

The protein localises to the nucleus. Its subcellular location is the cytoplasm. Its function is as follows. Exhibits ester hydrolase activity on the substrate p-nitrophenyl acetate, in vitro. May regulate DNA damage and repair by regulating HIF1A degradation via chaperone-mediated autophagy (CMA). The sequence is that of Ester hydrolase C11orf54 homolog from Xenopus laevis (African clawed frog).